A 70-amino-acid polypeptide reads, in one-letter code: MPGIRVKENEPFEVAIRRFKRTIEKTGVLTELRSREFYEKPTAERKRKLAAAVKRNHKRLRSQMLPPKLY.

The protein belongs to the bacterial ribosomal protein bS21 family.

In Azoarcus sp. (strain BH72), this protein is Small ribosomal subunit protein bS21.